The following is a 628-amino-acid chain: Rac GTPase-activating protein 1 (628 aa).

An N-acetylmethionine modification is found at M1. The stretch at 33–110 (QVVKDFEDFR…IQLIRDILMC (78 aa)) forms a coiled coil. Residues 107–286 (ILMCDTSGSI…GTPQNTGGMR (180 aa)) form an interaction with SLC26A8 region. S150 carries the phosphoserine; by PLK1 modification. S155 is subject to Phosphoserine. Residue S158 is modified to Phosphoserine; by PLK1. A Phosphothreonine modification is found at T162. 2 positions are modified to phosphoserine; by PLK1: S165 and S171. Residues 179-201 (KKREKRRSNSRQFIDGPPGPVKK) are disordered. 3 positions are modified to phosphoserine: S204, S207, and S215. The interval 242 to 284 (SWTRSRGKSGPLQPVNSDSALNSRPLEPRTDTDNLGTPQNTGG) is disordered. K249 is covalently cross-linked (Glycyl lysine isopeptide (Lys-Gly) (interchain with G-Cter in SUMO2)). S258 is modified (phosphoserine). Residues 274 to 283 (DNLGTPQNTG) are compositionally biased toward polar residues. A Phorbol-ester/DAG-type zinc finger spans residues 287–336 (LHDFVSKTVIKPESCVPCGKRIKFGKLSLKCRDCRLVSHPECRDRCPLPC). Residue T343 is modified to Phosphothreonine. The Rho-GAP domain occupies 350–540 (GMLADFVSQA…RLLSLPLEYW (191 aa)). Position 388 is a phosphoserine; by AURKB (S388). Residue K405 forms a Glycyl lysine isopeptide (Lys-Gly) (interchain with G-Cter in SUMO2) linkage. At S411 the chain carries Phosphoserine; by AURKB. Residues T564, T577, T585, and T602 each carry the phosphothreonine modification.

Heterotetramer of two molecules each of RACGAP1 and KIF23. Found in the centralspindlin complex. Associates with alpha-, beta- and gamma-tubulin and microtubules. Interacts via its Rho-GAP domain with RND2. Associates with AURKB during M phase. Interacts via its Rho-GAP domain and basic region with PRC1. The interaction with PRC1 inhibits its GAP activity towards CDC42 in vitro, which may be required for maintaining normal spindle morphology. Interacts with SLC26A8 via its N-terminus. Interacts with ECT2; the interaction is direct, occurs at anaphase and during cytokinesis in a microtubule-dependent manner, is enhanced by phosphorylation by PLK1 and phosphorylation at Ser-165 plays a major role in mediating binding. Interacts with RAB11FIP3; the interaction occurs at late telophase. Interacts with KIF23; the interaction is direct. Phosphorylated at multiple sites in the midbody during cytokinesis. Phosphorylation by AURKB on Ser-388 at the midbody is, at least in part, responsible for exerting its latent GAP activity towards RhoA. Phosphorylation on multiple serine residues by PLK1 enhances its association with ECT2 and is critical for cleavage furrow formation. Phosphorylation on Ser-165 plays a major role in mediating interaction with ECT2. Phosphorylation on Ser-158 does not appear to contribute to binding to ECT2. In terms of tissue distribution, highly expressed in testis, thymus and spleen and weakly expressed in brain, heart, skeletal muscle and kidney. In testis, expression is restricted to germ cells with the highest levels of expression found in spermatocytes. Not detected in adult liver. Also expressed in fetal liver and in several hematopoietic cell lines.

It is found in the nucleus. The protein localises to the cytoplasm. It localises to the cytoskeleton. Its subcellular location is the spindle. The protein resides in the cytoplasmic vesicle. It is found in the secretory vesicle. The protein localises to the acrosome. It localises to the cleavage furrow. Its subcellular location is the midbody. The protein resides in the midbody ring. It is found in the cell membrane. In terms of biological role, component of the centralspindlin complex that serves as a microtubule-dependent and Rho-mediated signaling required for the myosin contractile ring formation during the cell cycle cytokinesis. Required for proper attachment of the midbody to the cell membrane during cytokinesis. Sequentially binds to ECT2 and RAB11FIP3 which regulates cleavage furrow ingression and abscission during cytokinesis. Plays key roles in controlling cell growth and differentiation of hematopoietic cells through mechanisms other than regulating Rac GTPase activity. Has a critical role in erythropoiesis. Also involved in the regulation of growth-related processes in adipocytes and myoblasts. May be involved in regulating spermatogenesis and in the RACGAP1 pathway in neuronal proliferation. Shows strong GAP (GTPase activation) activity towards CDC42 and RAC1 and less towards RHOA. Essential for the early stages of embryogenesis. May play a role in regulating cortical activity through RHOA during cytokinesis. May participate in the regulation of sulfate transport in male germ cells. This Mus musculus (Mouse) protein is Rac GTPase-activating protein 1.